Consider the following 596-residue polypeptide: Potassium-transporting ATPase potassium-binding subunit (596 aa).

Transmembrane regions (helical) follow at residues 6 to 26 (ILTI…LGGF), 67 to 87 (AIGL…LQLF), 136 to 156 (GLTT…IALI), 177 to 197 (ITLY…VGQG), 283 to 303 (LSNF…CFTF), 314 to 334 (WVVL…AVHF), 413 to 433 (GLYG…LMIG), 450 to 470 (MVAI…AIAV), 518 to 538 (MLAI…LALA), and 560 to 580 (LFIV…YVPA).

It belongs to the KdpA family. As to quaternary structure, the system is composed of three essential subunits: KdpA, KdpB and KdpC.

Its subcellular location is the cell inner membrane. In terms of biological role, part of the high-affinity ATP-driven potassium transport (or Kdp) system, which catalyzes the hydrolysis of ATP coupled with the electrogenic transport of potassium into the cytoplasm. This subunit binds the periplasmic potassium ions and delivers the ions to the membrane domain of KdpB through an intramembrane tunnel. The sequence is that of Potassium-transporting ATPase potassium-binding subunit from Polynucleobacter asymbioticus (strain DSM 18221 / CIP 109841 / QLW-P1DMWA-1) (Polynucleobacter necessarius subsp. asymbioticus).